Here is a 158-residue protein sequence, read N- to C-terminus: Ribosome maturation factor RimP (158 aa).

Belongs to the RimP family.

Its subcellular location is the cytoplasm. In terms of biological role, required for maturation of 30S ribosomal subunits. The polypeptide is Ribosome maturation factor RimP (Lactobacillus acidophilus (strain ATCC 700396 / NCK56 / N2 / NCFM)).